Reading from the N-terminus, the 278-residue chain is Transmembrane protein 45B (278 aa).

7 helical membrane-spanning segments follow: residues 7 to 27 (HALPGSFFLIFGLWWSVKYPL), 49 to 69 (IIEGAVKALFAVIGILAEQFV), 95 to 115 (YLFFGVSGIIDMLTYLYFNIV), 117 to 137 (LGLDRVVLAMAVFVEGFLFYF), 149 to 169 (IHSLLLFSLFGATISICLEVI), 183 to 203 (LLILQGTWFWQIGFVLFPPFG), and 215 to 235 (VMFITMCFCWHYLVALCITAI). Phosphoserine is present on residues Ser273 and Ser275.

The protein belongs to the TMEM45 family.

The protein resides in the endosome membrane. It localises to the lysosome membrane. The protein localises to the golgi apparatus. It is found in the trans-Golgi network membrane. Functionally, plays a role in innate immunity. In Rattus norvegicus (Rat), this protein is Transmembrane protein 45B (Tmem45b).